Reading from the N-terminus, the 79-residue chain is MSAKKSPEEMKSIFQKYAAKEGDPNQLSKEELKLLIQSEFPSLLKASSTLDNLFKELDKNGDGEVSYEEFEVFFKKLSQ.

Position 2 is an N-acetylserine (S2). 2 consecutive EF-hand domains span residues 13-48 (IFQK…KASS) and 45-79 (KASS…KLSQ). The Ca(2+) site is built by Q26 and E31. Residues S42 and S47 each carry the phosphoserine modification. 5 residues coordinate Ca(2+): D58, N60, D62, E64, and E69.

It belongs to the S-100 family.

In Rattus norvegicus (Rat), this protein is Protein S100-G (S100g).